Reading from the N-terminus, the 290-residue chain is Serine protease 27 (290 aa).

A signal peptide spans 1–22 (MRRPAAVPLLLLLCFGSQRAKA). A propeptide spans 23-34 (ATACGRPRMLNR) (activation peptide). One can recognise a Peptidase S1 domain in the interval 35-277 (MVGGQDTQEG…HHNWIHRIIP (243 aa)). Asparagine 55 carries an N-linked (GlcNAc...) asparagine glycan. A disulfide bridge links cysteine 60 with cysteine 76. Histidine 75 serves as the catalytic Charge relay system. Residue asparagine 79 is glycosylated (N-linked (GlcNAc...) asparagine). The active-site Charge relay system is the aspartate 124. 3 disulfide bridges follow: cysteine 158–cysteine 235, cysteine 191–cysteine 214, and cysteine 225–cysteine 253. Serine 229 acts as the Charge relay system in catalysis.

Belongs to the peptidase S1 family. In terms of processing, N-glycosylated. In terms of tissue distribution, expressed predominantly in the pancreas.

The protein localises to the secreted. The chain is Serine protease 27 (PRSS27) from Homo sapiens (Human).